The sequence spans 322 residues: Ras association domain-containing protein 4 (322 aa).

Positions 96–161 (EASPQDSKVP…SKSRAPSEAQ (66 aa)) are disordered. S142 is subject to Phosphoserine. One can recognise a Ras-associating domain in the interval 175 to 264 (YNHKTSVFTP…KIFLMEADLS (90 aa)). The SARAH domain maps to 271 to 318 (VAQYIKFEMPVLDSFVEKLKEEEEREIIKLTMKFQALRLTMLQRLEQL).

In terms of assembly, interacts directly with activated KRAS in a GTP-dependent manner.

Its function is as follows. Potential tumor suppressor. May act as a KRAS effector protein. May promote apoptosis and cell cycle arrest. This Mus musculus (Mouse) protein is Ras association domain-containing protein 4 (Rassf4).